The sequence spans 750 residues: Probable methylmalonyl-CoA mutase large subunit (750 aa).

The (R)-methylmalonyl-CoA site is built by Tyr91, Met94, Thr101, Arg103, Tyr105, and Ser130. Residues Phe133 and Ala155 each contribute to the cob(II)alamin site. (R)-methylmalonyl-CoA contacts are provided by Thr211 and Gln213. The cob(II)alamin site is built by Val222 and Arg223. Residues Arg223, His260, Arg299, and Ser301 each contribute to the (R)-methylmalonyl-CoA site. Residues Gly349, Glu386, Ala389, Gly628, His629, Asp630, Arg631, Ser674, Leu676, Gly705, and Thr728 each coordinate cob(II)alamin. Residues 616–748 enclose the B12-binding domain; it reads RPRILIAKMG…HRLAERLGYT (133 aa).

The protein belongs to the methylmalonyl-CoA mutase family. In terms of assembly, heterodimer of an alpha and a beta chain. Adenosylcob(III)alamin is required as a cofactor.

The catalysed reaction is (R)-methylmalonyl-CoA = succinyl-CoA. It functions in the pathway metabolic intermediate metabolism; propanoyl-CoA degradation; succinyl-CoA from propanoyl-CoA: step 3/3. Its function is as follows. Catalyzes the isomerization of succinyl-CoA to methylmalonyl-CoA during synthesis of propionate from tricarboxylic acid-cycle intermediates. In Mycobacterium bovis (strain ATCC BAA-935 / AF2122/97), this protein is Probable methylmalonyl-CoA mutase large subunit (mutB).